The chain runs to 347 residues: GMP reductase (347 aa).

Residue 108–131 (ADFEKTKQILDLNPALNFVCIDVA) participates in NADP(+) binding. K(+) is bound by residues glycine 181 and glycine 183. Cysteine 186 (thioimidate intermediate) is an active-site residue. 216–239 (IVSDGGCTTPGDVAKAFGGGADFV) is a binding site for NADP(+).

It belongs to the IMPDH/GMPR family. GuaC type 1 subfamily. As to quaternary structure, homotetramer.

It catalyses the reaction IMP + NH4(+) + NADP(+) = GMP + NADPH + 2 H(+). Catalyzes the irreversible NADPH-dependent deamination of GMP to IMP. It functions in the conversion of nucleobase, nucleoside and nucleotide derivatives of G to A nucleotides, and in maintaining the intracellular balance of A and G nucleotides. In Escherichia coli O127:H6 (strain E2348/69 / EPEC), this protein is GMP reductase.